The following is a 515-amino-acid chain: Sterol 14-alpha demethylase cyp51A (515 aa).

Residues Leu-7–Phe-29 form a helical membrane-spanning segment. 2 N-linked (GlcNAc...) asparagine glycosylation sites follow: Asn-33 and Asn-269. Cys-454 is a heme binding site. An N-linked (GlcNAc...) asparagine glycan is attached at Asn-512.

This sequence belongs to the cytochrome P450 family. The cofactor is heme.

Its subcellular location is the endoplasmic reticulum membrane. It catalyses the reaction a 14alpha-methyl steroid + 3 reduced [NADPH--hemoprotein reductase] + 3 O2 = a Delta(14) steroid + formate + 3 oxidized [NADPH--hemoprotein reductase] + 4 H2O + 4 H(+). The catalysed reaction is a 14alpha-methyl steroid + reduced [NADPH--hemoprotein reductase] + O2 = a 14alpha-hydroxymethyl steroid + oxidized [NADPH--hemoprotein reductase] + H2O + H(+). The enzyme catalyses a 14alpha-hydroxymethyl steroid + reduced [NADPH--hemoprotein reductase] + O2 = a 14alpha-formyl steroid + oxidized [NADPH--hemoprotein reductase] + 2 H2O + H(+). It carries out the reaction a 14alpha-formyl steroid + reduced [NADPH--hemoprotein reductase] + O2 = a Delta(14) steroid + formate + oxidized [NADPH--hemoprotein reductase] + H2O + 2 H(+). It catalyses the reaction lanosterol + 3 reduced [NADPH--hemoprotein reductase] + 3 O2 = 4,4-dimethyl-5alpha-cholesta-8,14,24-trien-3beta-ol + formate + 3 oxidized [NADPH--hemoprotein reductase] + 4 H2O + 4 H(+). The catalysed reaction is lanosterol + reduced [NADPH--hemoprotein reductase] + O2 = 32-hydroxylanosterol + oxidized [NADPH--hemoprotein reductase] + H2O + H(+). The enzyme catalyses 32-hydroxylanosterol + reduced [NADPH--hemoprotein reductase] + O2 = 32-oxolanosterol + oxidized [NADPH--hemoprotein reductase] + 2 H2O + H(+). It carries out the reaction 32-oxolanosterol + reduced [NADPH--hemoprotein reductase] + O2 = 4,4-dimethyl-5alpha-cholesta-8,14,24-trien-3beta-ol + formate + oxidized [NADPH--hemoprotein reductase] + H2O + 2 H(+). It catalyses the reaction eburicol + 3 reduced [NADPH--hemoprotein reductase] + 3 O2 = 14-demethyleburicol + formate + 3 oxidized [NADPH--hemoprotein reductase] + 4 H2O + 4 H(+). The catalysed reaction is eburicol + reduced [NADPH--hemoprotein reductase] + O2 = 32-hydroxyeburicol + oxidized [NADPH--hemoprotein reductase] + H2O + H(+). The enzyme catalyses 32-hydroxyeburicol + reduced [NADPH--hemoprotein reductase] + O2 = 32-oxoeburicol + oxidized [NADPH--hemoprotein reductase] + 2 H2O + H(+). It carries out the reaction 32-oxoeburicol + reduced [NADPH--hemoprotein reductase] + O2 = 14-demethyleburicol + formate + oxidized [NADPH--hemoprotein reductase] + H2O + 2 H(+). It participates in steroid metabolism; ergosterol biosynthesis. With respect to regulation, the sterol 14-alpha demethylase activity is inhibited by azole compounds. Activity is inhibited by the novel and long-acting fungicidal azole, PC1244. Functionally, sterol 14alpha-demethylase, encoded by cyp51A and cyp51B, that plays a critical role in the third module of ergosterol biosynthesis pathway, being ergosterol the major sterol component in fungal membranes that participates in a variety of functions. The third module or late pathway involves the ergosterol synthesis itself through consecutive reactions that mainly occur in the endoplasmic reticulum (ER) membrane. In filamentous fungi, during the initial step of this module, lanosterol (lanosta-8,24-dien-3beta-ol) can be metabolized to eburicol. Sterol 14alpha-demethylase catalyzes the three-step oxidative removal of the 14alpha-methyl group (C-32) of both these sterols in the form of formate, and converts eburicol and lanosterol to 14-demethyleburicol (4,4,24-trimethylergosta-8,14,24(28)-trienol) and 4,4-dimethyl-5alpha-cholesta-8,14,24-trien-3beta-ol, respectively, which are further metabolized by other enzymes in the pathway to ergosterol. Can also use substrates not intrinsic to fungi, such as 24,25-dihydrolanosterol (DHL), producing 4,4'-dimethyl-8,14-cholestadien-3-beta-ol, but at lower rates than the endogenous substrates. As a target of azole drugs, plays a crucial role in azole susceptibility. This chain is Sterol 14-alpha demethylase cyp51A, found in Aspergillus fumigatus (strain ATCC MYA-4609 / CBS 101355 / FGSC A1100 / Af293) (Neosartorya fumigata).